A 229-amino-acid polypeptide reads, in one-letter code: Cytidylate kinase (229 aa).

Residue 10-18 (GYSSCGKST) participates in ATP binding.

This sequence belongs to the cytidylate kinase family. Type 1 subfamily.

The protein localises to the cytoplasm. It carries out the reaction CMP + ATP = CDP + ADP. The catalysed reaction is dCMP + ATP = dCDP + ADP. The protein is Cytidylate kinase of Phocaeicola vulgatus (strain ATCC 8482 / DSM 1447 / JCM 5826 / CCUG 4940 / NBRC 14291 / NCTC 11154) (Bacteroides vulgatus).